Reading from the N-terminus, the 725-residue chain is Peroxisomal fatty acid beta-oxidation multifunctional protein MFP2 (725 aa).

The Nucleophile role is filled by E119. E139 acts as the Proton acceptor in catalysis. Residues 723–725 (SRL) carry the Microbody targeting signal motif.

It in the N-terminal section; belongs to the enoyl-CoA hydratase/isomerase family. This sequence in the central section; belongs to the 3-hydroxyacyl-CoA dehydrogenase family. As to expression, highly expressed in senescing leaves and at lower levels in flowers and siliques.

It localises to the glyoxysome. The protein resides in the peroxisome. The enzyme catalyses a (3S)-3-hydroxyacyl-CoA = a (2E)-enoyl-CoA + H2O. It catalyses the reaction a 4-saturated-(3S)-3-hydroxyacyl-CoA = a (3E)-enoyl-CoA + H2O. The catalysed reaction is (3S)-3-hydroxybutanoyl-CoA = (2E)-butenoyl-CoA + H2O. It carries out the reaction (3S)-hydroxyoctanoyl-CoA = (2E)-octenoyl-CoA + H2O. The enzyme catalyses (3S)-3-hydroxydodecanoyl-CoA = (2E)-dodecenoyl-CoA + H2O. It catalyses the reaction (3S)-hydroxytetradecanoyl-CoA = (2E)-tetradecenoyl-CoA + H2O. The catalysed reaction is (3S)-hydroxyhexanoyl-CoA = (2E)-hexenoyl-CoA + H2O. It carries out the reaction a (3Z)-enoyl-CoA = a 4-saturated (2E)-enoyl-CoA. The enzyme catalyses a (3E)-enoyl-CoA = a 4-saturated (2E)-enoyl-CoA. It catalyses the reaction (3S)-3-hydroxybutanoyl-CoA = (3R)-3-hydroxybutanoyl-CoA. The catalysed reaction is a (3S)-3-hydroxyacyl-CoA + NAD(+) = a 3-oxoacyl-CoA + NADH + H(+). It carries out the reaction (3S)-3-hydroxybutanoyl-CoA + NAD(+) = acetoacetyl-CoA + NADH + H(+). The enzyme catalyses (3S)-hydroxyhexanoyl-CoA + NAD(+) = 3-oxohexanoyl-CoA + NADH + H(+). It catalyses the reaction (3S)-hydroxyoctanoyl-CoA + NAD(+) = 3-oxooctanoyl-CoA + NADH + H(+). The catalysed reaction is (3S)-3-hydroxydodecanoyl-CoA + NAD(+) = 3-oxododecanoyl-CoA + NADH + H(+). It carries out the reaction (3S)-hydroxytetradecanoyl-CoA + NAD(+) = 3-oxotetradecanoyl-CoA + NADH + H(+). Its pathway is lipid metabolism; fatty acid beta-oxidation. Involved in peroxisomal fatty acid beta-oxidation during seed germination. Possesses enoyl-CoA hydratase activity against long chain substrates (C14-C18) and 3-hydroxyacyl-CoA dehydrogenase activity against chains of variable sizes (C6-C18). Possesses 3-hydroxy-3-phenylpropionyl-CoA dehydrogenase activity and is involved in the peroxisomal beta-oxidation pathway for the biosynthesis of benzoic acid (BA). Required for the accumulation in seeds of substituted hydroxybenzoylated choline esters, which are BA-containing secondary metabolites. Fatty acid beta-oxidation pathway in peroxisomes regulates gene silencing, histone acetylation and DNA methylation. In Arabidopsis thaliana (Mouse-ear cress), this protein is Peroxisomal fatty acid beta-oxidation multifunctional protein MFP2.